Reading from the N-terminus, the 258-residue chain is Glucose 1-dehydrogenase 2 (258 aa).

11 to 35 (IVTGSSKGIGKAIAERFGKEKMNVV) contributes to the NADP(+) binding site. A substrate-binding site is contributed by Ser146. Tyr159 serves as the catalytic Proton acceptor.

The protein belongs to the short-chain dehydrogenases/reductases (SDR) family. As to quaternary structure, homotetramer.

It catalyses the reaction D-glucose + NAD(+) = D-glucono-1,5-lactone + NADH + H(+). The catalysed reaction is D-glucose + NADP(+) = D-glucono-1,5-lactone + NADPH + H(+). In Bacillus subtilis (strain 168), this protein is Glucose 1-dehydrogenase 2 (ycdF).